Reading from the N-terminus, the 88-residue chain is MVLLINYAVSLVSAIVVGAVLGMKLSFDMDSFEGSVLFPTPFVAIGLTALIGYLITLDLVSSIIIGIFASVFSKFTNKIFPGVNNDIN.

Helical transmembrane passes span 1-21 (MVLL…GAVL), 27-47 (FDMD…AIGL), and 49-69 (ALIG…GIFA).

Belongs to the EhaA family. In terms of assembly, putative multisubunit membrane-bound [NiFe]-hydrogenase eha is composed of at least 20 subunits.

The protein localises to the cell membrane. Functionally, one of the integral membrane subunits of multisubunit membrane-bound [NiFe]-hydrogenase eha. Eha is predicted to form large electron transfer complex and might catalyze energy-driven reduction of low-potential redox carriers. In Methanococcus maripaludis (strain DSM 14266 / JCM 13030 / NBRC 101832 / S2 / LL), this protein is Probable [NiFe]-hydrogenase-type-3 Eha complex membrane subunit A (ehaA).